The sequence spans 206 residues: Protein Ta0236 (206 aa).

An AMMECR1 domain is found at 16–205 (DIGTKAVRLA…EKDPEGVVEK (190 aa)).

The polypeptide is Protein Ta0236 (Thermoplasma acidophilum (strain ATCC 25905 / DSM 1728 / JCM 9062 / NBRC 15155 / AMRC-C165)).